The chain runs to 315 residues: Energy-coupling factor transporter ATP-binding protein EcfA2 (315 aa).

The 245-residue stretch at Ile31–Glu275 folds into the ABC transporter domain. Gly68–Ser75 provides a ligand contact to ATP.

Belongs to the ABC transporter superfamily. Energy-coupling factor EcfA family. As to quaternary structure, forms a stable energy-coupling factor (ECF) transporter complex composed of 2 membrane-embedded substrate-binding proteins (S component), 2 ATP-binding proteins (A component) and 2 transmembrane proteins (T component).

The protein localises to the cell membrane. In terms of biological role, ATP-binding (A) component of a common energy-coupling factor (ECF) ABC-transporter complex. Unlike classic ABC transporters this ECF transporter provides the energy necessary to transport a number of different substrates. The sequence is that of Energy-coupling factor transporter ATP-binding protein EcfA2 from Mesoplasma florum (strain ATCC 33453 / NBRC 100688 / NCTC 11704 / L1) (Acholeplasma florum).